Reading from the N-terminus, the 292-residue chain is Lyso-ornithine lipid O-acyltransferase (292 aa).

Residues 11-31 (GMLLVMVSLVLMPVQILCLWL) traverse the membrane as a helical segment. The tract at residues 258–292 (RLRGRSRSAAKGEPAPACSAAPDIPSDAQRSRLAP) is disordered.

It belongs to the 1-acyl-sn-glycerol-3-phosphate acyltransferase family. OlsA subfamily.

It localises to the membrane. It catalyses the reaction a lyso-ornithine lipid + a fatty acyl-[ACP] = an N(2)-[(3R)-3-(acyloxy)acyl]-L-ornithine lipid + holo-[ACP]. Its pathway is lipid metabolism. Functionally, catalyzes the second step in the formation of ornithine lipids, which are phosphorus-free membrane lipids. Uses acyl-acyl carrier protein (acyl-AcpP) as an acyl donor and converts lyso-ornithine lipid (LOL) into ornithine lipid (OL). This is Lyso-ornithine lipid O-acyltransferase from Rhizobium meliloti (strain 1021) (Ensifer meliloti).